The primary structure comprises 388 residues: Cdc42 effector protein 1 (388 aa).

Residues 1 to 28 form a disordered region; sequence MPGPQGGTGAPSMSLGKLSPVGWVPSSH. Phosphoserine occurs at positions 19 and 27. At T34 the chain carries Phosphothreonine. The CRIB domain occupies 38 to 52; that stretch reads ISPPLGDFRHTMHVG. S39 bears the Phosphoserine mark. R53 bears the Omega-N-methylarginine mark. 6 positions are modified to phosphoserine: S65, S77, S101, S113, S121, and S139. Residues 165 to 206 are disordered; that stretch reads RLPRVEKHSSRDRDHDRDPDHSQDREQSSSPSEPNPNPELRR. Positions 167 to 191 are enriched in basic and acidic residues; the sequence is PRVEKHSSRDRDHDRDPDHSQDREQ. 4 positions are modified to phosphoserine: S193, S207, S209, and S212. Tandem repeats lie at residues 237 to 243 and 250 to 256. A disordered region spans residues 237 to 257; that stretch reads PAANPPAPAANPAPTAKPPAD. A 2 X 7 AA tandem repeats of [PT]-[AT]-A-[ENT]-[PT]-[PTS]-[AG] region spans residues 237–270; sequence PAANPPAPAANPAPTAKPPADAVTTLDTVTSLPA. Positions 239–253 are enriched in pro residues; it reads ANPPAPAANPAPTAK. A phosphoserine mark is found at S298, S318, S347, and S350.

This sequence belongs to the BORG/CEP family. In terms of assembly, interacts with RHOQ and CDC42, in a GTP-dependent manner.

The protein resides in the endomembrane system. It is found in the cytoplasm. The protein localises to the cytoskeleton. In terms of biological role, probably involved in the organization of the actin cytoskeleton. Induced membrane extensions in fibroblasts. The polypeptide is Cdc42 effector protein 1 (Rattus norvegicus (Rat)).